Reading from the N-terminus, the 105-residue chain is N(4)-acetylcytidine amidohydrolase (105 aa).

An ASCH domain is found at 7 to 93; the sequence is TFFERFEHDI…VIAEIYPGLE (87 aa). Lys-21 (proton acceptor) is an active-site residue. Thr-24 serves as the catalytic Nucleophile. The active-site Proton donor is Glu-74.

Belongs to the N(4)-acetylcytidine amidohydrolase family.

The catalysed reaction is N(4)-acetylcytidine + H2O = cytidine + acetate + H(+). The enzyme catalyses N(4)-acetyl-2'-deoxycytidine + H2O = 2'-deoxycytidine + acetate + H(+). It carries out the reaction N(4)-acetylcytosine + H2O = cytosine + acetate + H(+). Functionally, catalyzes the hydrolysis of N(4)-acetylcytidine (ac4C). The protein is N(4)-acetylcytidine amidohydrolase of Shewanella baltica (strain OS195).